Consider the following 957-residue polypeptide: Glycine dehydrogenase (decarboxylating) (957 aa).

At Lys-708 the chain carries N6-(pyridoxal phosphate)lysine.

Belongs to the GcvP family. As to quaternary structure, the glycine cleavage system is composed of four proteins: P, T, L and H. It depends on pyridoxal 5'-phosphate as a cofactor.

It catalyses the reaction N(6)-[(R)-lipoyl]-L-lysyl-[glycine-cleavage complex H protein] + glycine + H(+) = N(6)-[(R)-S(8)-aminomethyldihydrolipoyl]-L-lysyl-[glycine-cleavage complex H protein] + CO2. In terms of biological role, the glycine cleavage system catalyzes the degradation of glycine. The P protein binds the alpha-amino group of glycine through its pyridoxal phosphate cofactor; CO(2) is released and the remaining methylamine moiety is then transferred to the lipoamide cofactor of the H protein. This Shigella flexneri protein is Glycine dehydrogenase (decarboxylating).